Reading from the N-terminus, the 588-residue chain is Probable G-protein coupled receptor 162 (588 aa).

Residues Met-1 to Ala-17 lie on the Extracellular side of the membrane. A helical transmembrane segment spans residues Leu-18–Ile-38. Residues Ser-39 to Glu-49 are Cytoplasmic-facing. Residues Leu-50–Phe-70 traverse the membrane as a helical segment. Residues Ala-71–Lys-91 lie on the Extracellular side of the membrane. Asn-86 carries an N-linked (GlcNAc...) asparagine glycan. Residues Val-92 to Ser-112 traverse the membrane as a helical segment. The Cytoplasmic segment spans residues Tyr-113–Gln-133. The chain crosses the membrane as a helical span at residues Ala-134–Ile-154. At Gly-155–Lys-174 the chain is on the extracellular side. The helical transmembrane segment at Ile-175 to Leu-195 threads the bilayer. The Cytoplasmic segment spans residues Val-196–Ala-275. A helical transmembrane segment spans residues Ile-276–Leu-296. Residues Lys-297–Pro-303 are Extracellular-facing. A helical transmembrane segment spans residues Trp-304–Ile-324. Topologically, residues Trp-325–Leu-588 are cytoplasmic. Residues Ser-413 and Ser-435 each carry the phosphoserine modification. Disordered stretches follow at residues Gln-445–Gly-474 and Glu-511–Leu-550. The span at Pro-530–Arg-546 shows a compositional bias: low complexity.

Belongs to the G-protein coupled receptor 1 family.

The protein localises to the cell membrane. In terms of biological role, orphan receptor. This is Probable G-protein coupled receptor 162 (GPR162) from Homo sapiens (Human).